A 175-amino-acid chain; its full sequence is Rubredoxin-1 (175 aa).

2 Rubredoxin-like domains span residues 1–53 (MARY…FVLI) and 119–170 (FLKW…YVLY). 8 residues coordinate Fe cation: cysteine 6, cysteine 9, cysteine 39, cysteine 42, cysteine 124, cysteine 127, cysteine 157, and cysteine 160.

This sequence belongs to the rubredoxin family. The cofactor is Fe(3+).

The protein resides in the cytoplasm. The protein operates within hydrocarbon metabolism; alkane degradation. Involved in the hydrocarbon hydroxylating system, which transfers electrons from NADH to rubredoxin reductase and then through rubredoxin to alkane 1 monooxygenase. In Pseudomonas putida (Arthrobacter siderocapsulatus), this protein is Rubredoxin-1 (alkG).